The sequence spans 435 residues: tRNA(Ile)-lysidine synthase (435 aa).

24–29 provides a ligand contact to ATP; the sequence is SGGLDS.

This sequence belongs to the tRNA(Ile)-lysidine synthase family.

It is found in the cytoplasm. It catalyses the reaction cytidine(34) in tRNA(Ile2) + L-lysine + ATP = lysidine(34) in tRNA(Ile2) + AMP + diphosphate + H(+). Functionally, ligates lysine onto the cytidine present at position 34 of the AUA codon-specific tRNA(Ile) that contains the anticodon CAU, in an ATP-dependent manner. Cytidine is converted to lysidine, thus changing the amino acid specificity of the tRNA from methionine to isoleucine. The chain is tRNA(Ile)-lysidine synthase from Chromobacterium violaceum (strain ATCC 12472 / DSM 30191 / JCM 1249 / CCUG 213 / NBRC 12614 / NCIMB 9131 / NCTC 9757 / MK).